The primary structure comprises 434 residues: Adenylosuccinate synthetase (434 aa).

Residues Gly-15–Lys-21 and Gly-43–Thr-45 each bind GTP. Asp-16 serves as the catalytic Proton acceptor. 2 residues coordinate Mg(2+): Asp-16 and Gly-43. IMP contacts are provided by residues Asp-16–Lys-19, Asn-41–His-44, Thr-133, Arg-147, Gln-228, Thr-243, and Arg-307. His-44 serves as the catalytic Proton donor. Ser-303 to Arg-309 lines the substrate pocket. Residues Arg-309, Lys-335–Asp-337, and Ser-418–Gly-420 each bind GTP.

The protein belongs to the adenylosuccinate synthetase family. In terms of assembly, homodimer. It depends on Mg(2+) as a cofactor.

It is found in the cytoplasm. The enzyme catalyses IMP + L-aspartate + GTP = N(6)-(1,2-dicarboxyethyl)-AMP + GDP + phosphate + 2 H(+). The protein operates within purine metabolism; AMP biosynthesis via de novo pathway; AMP from IMP: step 1/2. Its function is as follows. Plays an important role in the de novo pathway of purine nucleotide biosynthesis. Catalyzes the first committed step in the biosynthesis of AMP from IMP. This chain is Adenylosuccinate synthetase, found in Neisseria gonorrhoeae (strain NCCP11945).